Consider the following 240-residue polypeptide: Enoyl-CoA delta isomerase 2, peroxisomal (240 aa).

The short motif at 238 to 240 (PKL) is the Microbody targeting signal element.

This sequence belongs to the enoyl-CoA hydratase/isomerase family.

Its subcellular location is the peroxisome. The enzyme catalyses a (3Z)-enoyl-CoA = a 4-saturated (2E)-enoyl-CoA. It carries out the reaction a (3E)-enoyl-CoA = a 4-saturated (2E)-enoyl-CoA. It participates in lipid metabolism; fatty acid beta-oxidation. Its function is as follows. Able to isomerize both 3-cis and 3-trans double bonds into the 2-trans form in a range of enoyl-CoA species. Essential for the beta oxidation of unsaturated fatty acids. Involved with IBR1 and IBR3 in the peroxisomal beta-oxidation of indole-3-butyric acid (IBA) to form indole-3-acetic acid (IAA), a biologically active auxin. The chain is Enoyl-CoA delta isomerase 2, peroxisomal from Arabidopsis thaliana (Mouse-ear cress).